Reading from the N-terminus, the 129-residue chain is Large ribosomal subunit protein bL12 (129 aa).

It belongs to the bacterial ribosomal protein bL12 family. In terms of assembly, homodimer. Part of the ribosomal stalk of the 50S ribosomal subunit. Forms a multimeric L10(L12)X complex, where L10 forms an elongated spine to which 2 to 4 L12 dimers bind in a sequential fashion. Binds GTP-bound translation factors.

In terms of biological role, forms part of the ribosomal stalk which helps the ribosome interact with GTP-bound translation factors. Is thus essential for accurate translation. This Thermosipho melanesiensis (strain DSM 12029 / CIP 104789 / BI429) protein is Large ribosomal subunit protein bL12.